We begin with the raw amino-acid sequence, 201 residues long: Inner membrane protein YnbA (201 aa).

Residues methionine 1 to glycine 43 lie on the Periplasmic side of the membrane. A helical membrane pass occupies residues leucine 44 to isoleucine 64. Residues arginine 65 to arginine 84 are Cytoplasmic-facing. The chain crosses the membrane as a helical span at residues leucine 85–phenylalanine 107. Over leucine 108–valine 116 the chain is Periplasmic. The chain crosses the membrane as a helical span at residues isoleucine 117–valine 139. The Cytoplasmic segment spans residues arginine 140–arginine 151. The helical transmembrane segment at alanine 152 to asparagine 172 threads the bilayer. At asparagine 173–leucine 175 the chain is on the periplasmic side. Residues tryptophan 176–leucine 196 form a helical membrane-spanning segment. The Cytoplasmic segment spans residues methionine 197 to isoleucine 201.

The protein localises to the cell inner membrane. In Escherichia coli (strain K12), this protein is Inner membrane protein YnbA (ynbA).